The primary structure comprises 503 residues: Glutamyl-tRNA(Gln) amidotransferase subunit A (503 aa).

Catalysis depends on charge relay system residues Lys-79 and Ser-154. The active-site Acyl-ester intermediate is the Ser-178.

The protein belongs to the amidase family. GatA subfamily. In terms of assembly, heterotrimer of A, B and C subunits.

The catalysed reaction is L-glutamyl-tRNA(Gln) + L-glutamine + ATP + H2O = L-glutaminyl-tRNA(Gln) + L-glutamate + ADP + phosphate + H(+). In terms of biological role, allows the formation of correctly charged Gln-tRNA(Gln) through the transamidation of misacylated Glu-tRNA(Gln) in organisms which lack glutaminyl-tRNA synthetase. The reaction takes place in the presence of glutamine and ATP through an activated gamma-phospho-Glu-tRNA(Gln). The polypeptide is Glutamyl-tRNA(Gln) amidotransferase subunit A (Agathobacter rectalis (strain ATCC 33656 / DSM 3377 / JCM 17463 / KCTC 5835 / VPI 0990) (Eubacterium rectale)).